Reading from the N-terminus, the 173-residue chain is Superoxide dismutase [Cu-Zn] 2 (173 aa).

An N-terminal signal peptide occupies residues 1 to 19 (MKRLSLAMVTLLACAGAQA). Positions 67, 69, and 92 each coordinate Cu cation. C74 and C169 are oxidised to a cystine. Zn(2+)-binding residues include H92, H101, H109, and D112. H147 is a Cu cation binding site.

This sequence belongs to the Cu-Zn superoxide dismutase family. Monomer. Requires Cu cation as cofactor. Zn(2+) serves as cofactor.

The protein resides in the periplasm. The catalysed reaction is 2 superoxide + 2 H(+) = H2O2 + O2. Its function is as follows. Destroys radicals which are normally produced within the cells and which are toxic to biological systems. The polypeptide is Superoxide dismutase [Cu-Zn] 2 (sodC) (Salmonella typhimurium (strain LT2 / SGSC1412 / ATCC 700720)).